We begin with the raw amino-acid sequence, 286 residues long: MPKISGQTQLLGVIGDPIEHTLSPAMHNAALEYLGLNYVYVPFWVKPQQLGVAIAGLEALNVVGFNVTIPHKETILPYLADVSDLAQQVGAVNTVYRSEKGWVGTNTDVHGFLAPLRQQSCLWSEIAVLVLGYGGAARAVVTACYDLGCRQIYISGRQRERLGAFVASWPQITLHPLLWSERATCLAKISLVVNTTPIGMSPHTGATPLTAEDLAKLPATAIVYDLIYKPRPTLLLQLAMARGLQTFDGLAMLLHQGAAALEYWLGQPAPTAIMATALETALGTEK.

Residues 21 to 23 and threonine 68 contribute to the shikimate site; that span reads TLS. The Proton acceptor role is filled by lysine 72. Aspartate 84 contacts NADP(+). Shikimate contacts are provided by asparagine 93 and aspartate 108. Residues 132-136 and leucine 226 contribute to the NADP(+) site; that span reads GYGGA. Tyrosine 228 serves as a coordination point for shikimate. Glycine 249 contributes to the NADP(+) binding site.

The protein belongs to the shikimate dehydrogenase family. As to quaternary structure, homodimer.

It carries out the reaction shikimate + NADP(+) = 3-dehydroshikimate + NADPH + H(+). It functions in the pathway metabolic intermediate biosynthesis; chorismate biosynthesis; chorismate from D-erythrose 4-phosphate and phosphoenolpyruvate: step 4/7. Its function is as follows. Involved in the biosynthesis of the chorismate, which leads to the biosynthesis of aromatic amino acids. Catalyzes the reversible NADPH linked reduction of 3-dehydroshikimate (DHSA) to yield shikimate (SA). This Thermosynechococcus vestitus (strain NIES-2133 / IAM M-273 / BP-1) protein is Shikimate dehydrogenase (NADP(+)).